The sequence spans 260 residues: MALRRPMVAGNWKMNGNAALAQELFKKFASKLQNDSAEVVLCPPSIYLESVRQLLEDNKQALDGALVRMGAQNVSQHDFGAYTGEISGQMLKDSGCRYVIIGHSERRRMYGETSNIVAEKFAAAQKHGLTPILCVGESGPAREARRTFEVIAEELDIVIEKNGTMAFDNAIIAYEPLWAVGTGKSATPEQAQEVHAFIRKRLSEVSPFIGENVRILYGGSVTPSNAADLFAQPDVDGGLIGGASLNSSEFLSLCTIAMSA.

11-13 (NWK) contacts substrate. The active-site Electrophile is H103. Residue E175 is the Proton acceptor of the active site. Residues G181, S220, and 241 to 242 (GG) contribute to the substrate site.

Belongs to the triosephosphate isomerase family. Homodimer.

Its subcellular location is the cytoplasm. It carries out the reaction D-glyceraldehyde 3-phosphate = dihydroxyacetone phosphate. It functions in the pathway carbohydrate biosynthesis; gluconeogenesis. The protein operates within carbohydrate degradation; glycolysis; D-glyceraldehyde 3-phosphate from glycerone phosphate: step 1/1. Functionally, involved in the gluconeogenesis. Catalyzes stereospecifically the conversion of dihydroxyacetone phosphate (DHAP) to D-glyceraldehyde-3-phosphate (G3P). This chain is Triosephosphate isomerase, found in Shewanella denitrificans (strain OS217 / ATCC BAA-1090 / DSM 15013).